A 282-amino-acid chain; its full sequence is Elongation factor Ts (282 aa).

The interval 80 to 83 is involved in Mg(2+) ion dislocation from EF-Tu; the sequence is TDFV.

It belongs to the EF-Ts family.

It localises to the cytoplasm. Its function is as follows. Associates with the EF-Tu.GDP complex and induces the exchange of GDP to GTP. It remains bound to the aminoacyl-tRNA.EF-Tu.GTP complex up to the GTP hydrolysis stage on the ribosome. The protein is Elongation factor Ts of Protochlamydia amoebophila (strain UWE25).